A 622-amino-acid chain; its full sequence is Phosphomethylpyrimidine synthase (622 aa).

A disordered region spans residues 109–130 (EPISNNNNDRQSSDKQLSFTTN). Substrate-binding positions include N234, M263, Y292, H328, 348–350 (SRG), 389–392 (DGLR), and E428. H432 contacts Zn(2+). A substrate-binding site is contributed by Y455. H496 is a binding site for Zn(2+). [4Fe-4S] cluster is bound by residues C576, C579, and C584.

This sequence belongs to the ThiC family. As to quaternary structure, homodimer. [4Fe-4S] cluster is required as a cofactor.

The catalysed reaction is 5-amino-1-(5-phospho-beta-D-ribosyl)imidazole + S-adenosyl-L-methionine = 4-amino-2-methyl-5-(phosphooxymethyl)pyrimidine + CO + 5'-deoxyadenosine + formate + L-methionine + 3 H(+). It participates in cofactor biosynthesis; thiamine diphosphate biosynthesis. In terms of biological role, catalyzes the synthesis of the hydroxymethylpyrimidine phosphate (HMP-P) moiety of thiamine from aminoimidazole ribotide (AIR) in a radical S-adenosyl-L-methionine (SAM)-dependent reaction. This is Phosphomethylpyrimidine synthase from Baumannia cicadellinicola subsp. Homalodisca coagulata.